A 158-amino-acid polypeptide reads, in one-letter code: Transcription factor BTF3 homolog 4 (158 aa).

The NAC-A/B domain maps to 33-98; the sequence is TADDKKLQSS…AETKQLTEML (66 aa). The disordered stretch occupies residues 125 to 158; that stretch reads LDNKAPKAEDIDEEDDDVPDLVENFDEASKNEAN. Acidic residues predominate over residues 134–150; that stretch reads DIDEEDDDVPDLVENFD.

The protein belongs to the NAC-beta family.

The chain is Transcription factor BTF3 homolog 4 (btf3l4) from Danio rerio (Zebrafish).